The following is a 392-amino-acid chain: 26S proteasome regulatory subunit 8 homolog (392 aa).

Glycine 176–threonine 183 provides a ligand contact to ATP.

It belongs to the AAA ATPase family. In terms of assembly, the 26S proteasome consists of a 20S proteasome core and two 19S regulatory subunits. The 20S proteasome core is composed of 28 subunits that are arranged in four stacked rings, resulting in a barrel-shaped structure. The two end rings are each formed by seven alpha subunits, and the two central rings are each formed by seven beta subunits. The catalytic chamber with the active sites is on the inside of the barrel.

The protein localises to the cytoplasm. It is found in the nucleus. Acts as a regulatory subunit of the 26S proteasome which degrades poly-ubiquitinated proteins in the cytoplasm and in the nucleus. It is essential for the regulated turnover of proteins and for the removal of misfolded proteins. The proteasome is a multicatalytic proteinase complex that is characterized by its ability to cleave peptides with Arg, Phe, Tyr, Leu, and Glu adjacent to the leaving group at neutral or slightly basic pH. This is 26S proteasome regulatory subunit 8 homolog (RPT6) from Encephalitozoon cuniculi (strain GB-M1) (Microsporidian parasite).